The chain runs to 349 residues: Putative F-box/kelch-repeat protein At4g02310 (349 aa).

The 48-residue stretch at 11-58 (SLFSLLPNDIVLNILARVPRWYHPILSCVSKNLRFLVSSSELKITRSL) folds into the F-box domain. A Kelch repeat occupies 154 to 204 (KIYVFGGIDDMNKRYYEGIHAQVFDLKTQTWHVGPNLSVKLACLNRSVVTP).

The sequence is that of Putative F-box/kelch-repeat protein At4g02310 from Arabidopsis thaliana (Mouse-ear cress).